A 331-amino-acid polypeptide reads, in one-letter code: Adenosine deaminase (331 aa).

Zn(2+) contacts are provided by His-12 and His-14. Substrate is bound by residues His-14, Asp-16, and Gly-170. His-197 provides a ligand contact to Zn(2+). Residue Glu-200 is the Proton donor of the active site. Asp-278 contributes to the Zn(2+) binding site. Asp-279 lines the substrate pocket.

This sequence belongs to the metallo-dependent hydrolases superfamily. Adenosine and AMP deaminases family. Adenosine deaminase subfamily. Zn(2+) serves as cofactor.

The catalysed reaction is adenosine + H2O + H(+) = inosine + NH4(+). It catalyses the reaction 2'-deoxyadenosine + H2O + H(+) = 2'-deoxyinosine + NH4(+). Functionally, catalyzes the hydrolytic deamination of adenosine and 2-deoxyadenosine. This Shewanella baltica (strain OS223) protein is Adenosine deaminase.